The primary structure comprises 601 residues: Glutathione-regulated potassium-efflux system protein KefB (601 aa).

The next 13 helical transmembrane spans lie at 4 to 24 (SDFLLAGVLFLFAAVAAVPLA), 29 to 49 (IGAVLGYLLAGIAIGPWGLGF), 55 to 75 (EILHFSELGVVFLMFIIGLEL), 87 to 107 (IFGVGAAQVLLSSALLAGLLM), 115 to 135 (AAVVGGIGLAMSSTAMALQLM), 152 to 172 (VLLFQDLAVIPALALVPLLAG), 177 to 197 (HFDWMKIGMKVLAFVGMLIGG), 207 to 227 (FIAASGVREVFTAATLLLVLG), 230 to 250 (LFMDALGLSMALGTFIAGVLL), 268 to 288 (GLLLGLFFISVGMSLNLGVLY), 291 to 311 (LLWVVISVVVLVAVKILVLYL), 324 to 344 (MQFAGVLSQGGEFAFVLFSTA), and 356 to 376 (ALLLVTVTLSMMTTPLLMKLV). The RCK N-terminal domain occupies 400 to 519 (KPQVIVVGFG…AGVTQFSRET (120 aa)).

Belongs to the monovalent cation:proton antiporter 2 (CPA2) transporter (TC 2.A.37) family. KefB subfamily. In terms of assembly, interacts with the regulatory subunit KefG.

The protein localises to the cell inner membrane. Its function is as follows. Pore-forming subunit of a potassium efflux system that confers protection against electrophiles. Catalyzes K(+)/H(+) antiport. The polypeptide is Glutathione-regulated potassium-efflux system protein KefB (Escherichia coli O81 (strain ED1a)).